A 304-amino-acid polypeptide reads, in one-letter code: UDP-N-acetylenolpyruvoylglucosamine reductase (304 aa).

In terms of domain architecture, FAD-binding PCMH-type spans 31–196; the sequence is RVGGPAERFY…VAAELELAPG (166 aa). Residue arginine 176 is part of the active site. The Proton donor role is filled by serine 225. The active site involves glutamate 295.

This sequence belongs to the MurB family. The cofactor is FAD.

The protein resides in the cytoplasm. The enzyme catalyses UDP-N-acetyl-alpha-D-muramate + NADP(+) = UDP-N-acetyl-3-O-(1-carboxyvinyl)-alpha-D-glucosamine + NADPH + H(+). The protein operates within cell wall biogenesis; peptidoglycan biosynthesis. Cell wall formation. The polypeptide is UDP-N-acetylenolpyruvoylglucosamine reductase (Methylococcus capsulatus (strain ATCC 33009 / NCIMB 11132 / Bath)).